The following is a 251-amino-acid chain: Protein crossbronx (251 aa).

In terms of domain architecture, UBC core spans 20–176 (QQEYKILAEY…TRENIRESLA (157 aa)). Residues 211–251 (QSKHLESQSQQSNNGGNGGGGGAATGLSWVKEGEFKPLSVE) are disordered. Gly residues predominate over residues 225 to 234 (GGNGGGGGAA).

Belongs to the ubiquitin-conjugating enzyme family. FTS subfamily.

The protein is Protein crossbronx (cbx) of Drosophila willistoni (Fruit fly).